The following is a 59-amino-acid chain: Large ribosomal subunit protein uL30 (59 aa).

It belongs to the universal ribosomal protein uL30 family. In terms of assembly, part of the 50S ribosomal subunit.

The chain is Large ribosomal subunit protein uL30 from Streptococcus agalactiae serotype Ia (strain ATCC 27591 / A909 / CDC SS700).